The primary structure comprises 337 residues: Protoheme IX farnesyltransferase (337 aa).

The span at 1–17 (MPFSISKDTVSNQTTHV) shows a compositional bias: polar residues. Residues 1 to 41 (MPFSISKDTVSNQTTHVATAPASQRPDPVETKVEQEQGRPR) form a disordered region. Over residues 27–41 (DPVETKVEQEQGRPR) the composition is skewed to basic and acidic residues. 8 helical membrane passes run 59–79 (IIEL…HGVP), 81–101 (LGLV…ANVF), 130–150 (SALI…GFGA), 153–173 (LSAA…SMLL), 196–216 (WTAV…IVFW), 250–270 (VAIQ…VLWP), 271–291 (VAHM…VFIV), and 311–331 (PMGL…AIAV).

The protein belongs to the UbiA prenyltransferase family. Protoheme IX farnesyltransferase subfamily.

The protein localises to the cell membrane. It carries out the reaction heme b + (2E,6E)-farnesyl diphosphate + H2O = Fe(II)-heme o + diphosphate. The protein operates within porphyrin-containing compound metabolism; heme O biosynthesis; heme O from protoheme: step 1/1. Converts heme B (protoheme IX) to heme O by substitution of the vinyl group on carbon 2 of heme B porphyrin ring with a hydroxyethyl farnesyl side group. This Cutibacterium acnes (strain DSM 16379 / KPA171202) (Propionibacterium acnes) protein is Protoheme IX farnesyltransferase.